The sequence spans 125 residues: MAEKIAKKLNINEKTVVECKEFEVIEGNLDNSLWIMHINNEFKIVLDVEEYMKLMETMKNVMKENFELKLEKAILSEFPVDYDDVKAVVLEEMKRDENASISEILNKVKLEHPNLFYNLDLEKIF.

It belongs to the UPF0763 family.

The sequence is that of UPF0763 protein NAMH_0545 from Nautilia profundicola (strain ATCC BAA-1463 / DSM 18972 / AmH).